The sequence spans 1195 residues: Probable beta-tubulin polyglutamylase (1195 aa).

Positions 1–110 are disordered; the sequence is MSQKDIYNKY…QTEMTDNQNE (110 aa). Composition is skewed to acidic residues over residues 17 to 27 and 44 to 79; these read DQQEEDDDENQ and QGED…EENN. Coiled coils occupy residues 59–103 and 144–260; these read DEEQ…QQTE and QDMD…QSEQ. Residues 80–89 are compositionally biased toward low complexity; it reads QDQQNNSESN. Over residues 90 to 110 the composition is skewed to polar residues; sequence LQYDKTNQKNQQTEMTDNQNE. The tract at residues 281–343 is disordered; it reads PKNDVDQYTG…NKKEQAKKQQ (63 aa). The segment covering 294 to 316 has biased composition (acidic residues); the sequence is DSGESDEEANNEDDDEDEDDESE. Basic residues predominate over residues 322-334; that stretch reads RKNKAQLLKKKNN. The 354-residue stretch at 350–703 folds into the TTL domain; that stretch reads KQTLVLNVAD…TCKAKNEIIN (354 aa). ATP-binding positions include 500–503, Lys513, and Asp515; that span reads QRYL. Residues 674–756 are c-MTBD region; it reads PLDSYIKKNT…GFERIFPMED (83 aa). Residues 783 to 862 are disordered; the sequence is RNTKKVTEDP…ETIQCEDQEQ (80 aa). Residues 825–849 show a composition bias toward polar residues; that stretch reads PNSQTTINKGIPGQNGQRPSSSQLN. Residues 850 to 860 show a composition bias toward acidic residues; the sequence is EEGETIQCEDQ.

It localises to the cytoplasm. The protein resides in the cytoskeleton. Its subcellular location is the cell projection. The protein localises to the cilium. It is found in the cilium basal body. Functionally, probable tubulin polyglutamylase with a strong preference for beta-tubulin. The chain is Probable beta-tubulin polyglutamylase (Ttll6a) from Tetrahymena thermophila (strain SB210).